Here is a 557-residue protein sequence, read N- to C-terminus: Inositol-3-phosphate synthase 1 (557 aa).

NAD(+)-binding residues include Gly-67, Gly-68, Asn-69, Asn-70, Asp-141, Ser-177, Val-178, Gln-188, Arg-191, Thr-228, Ala-229, Asn-230, Thr-231, Gly-278, Ser-279, Asp-303, Ser-306, Asn-337, Asn-338, Asp-339, and Lys-352. Ser-279 carries the post-translational modification Phosphoserine. At Ser-357 the chain carries Phosphoserine. Gly-390, Asp-391, Asp-419, and Ser-420 together coordinate NAD(+). The disordered stretch occupies residues 514-557; that stretch reads GIKPEEVKATSPLPCKKESTPATNGCTGDANGHTQAPTPELSTA. Ser-524 is modified (phosphoserine). The span at 533 to 557 shows a compositional bias: polar residues; it reads TPATNGCTGDANGHTQAPTPELSTA.

It belongs to the myo-inositol 1-phosphate synthase family. As to quaternary structure, homotrimer. NAD(+) is required as a cofactor. Post-translationally, phosphorylation at Ser-524 does not appear to affect enzyme activity, and is detected in brain and testis. In terms of tissue distribution, expressed in testis, brain and epididymis (at protein level). Moderately expressed in brain, lung, liver, and kidney. Low expression in heart and spleen. Very low expression in skeletal muscle. Expressed in testis, spleen, heart, brainstem, hippocampus, cerebellum, cortex and amygdala. Absent or very lowly expressed in intestine, lung and muscle. As to expression, expressed in intestine, lung, liver, muscle, testis, spleen, brainstem, hippocampus, cerebellum, cortex and amygdala. Absent or lowly expressed in heart and kidney. In terms of tissue distribution, expressed in intestine (at protein level).

The protein localises to the cytoplasm. It catalyses the reaction D-glucose 6-phosphate = 1D-myo-inositol 3-phosphate. It functions in the pathway polyol metabolism; myo-inositol biosynthesis; myo-inositol from D-glucose 6-phosphate: step 1/2. Its activity is regulated as follows. Inhibited by 2-deoxyglucitol 6-phosphate (dgtolP) and 2-deoxy-D-glucose 6-phosphate. Inhibited by copper, mercury, cadmium, zinc and copper ions. Activated by potassium and ammonium ions. Key enzyme in myo-inositol biosynthesis pathway that catalyzes the conversion of glucose 6-phosphate to 1-myo-inositol 1-phosphate in a NAD-dependent manner. Rate-limiting enzyme in the synthesis of all inositol-containing compounds. Functionally, key enzyme in myo-inositol biosynthesis pathway that catalyzes the conversion of glucose 6-phosphate to 1-myo-inositol 1-phosphate in a NAD-dependent manner. In terms of biological role, competitively inhibits the function of isoform 1, presumably by competing for NAD cofactor. This is Inositol-3-phosphate synthase 1 (Isyna1) from Rattus norvegicus (Rat).